The following is a 256-amino-acid chain: Trypsin alpha (256 aa).

Residues 1 to 22 (MLKIVILLSAVVCALGGTVPEG) form the signal peptide. Positions 23-30 (LLPQLDGR) are cleaved as a propeptide — activation peptide. Residues 31–254 (IVGGSATTIS…LRSWVVSTAN (224 aa)) enclose the Peptidase S1 domain. Cysteine 56 and cysteine 72 are oxidised to a cystine. Active-site charge relay system residues include histidine 71 and aspartate 116. 2 cysteine pairs are disulfide-bonded: cysteine 180-cysteine 197 and cysteine 206-cysteine 230. Serine 210 (charge relay system) is an active-site residue.

The protein belongs to the peptidase S1 family. As to expression, synthesized in the midgut of both larvae and adults, primarily in the ventriculus and gastric caeca.

It localises to the secreted. It is found in the extracellular space. The enzyme catalyses Preferential cleavage: Arg-|-Xaa, Lys-|-Xaa.. In Drosophila melanogaster (Fruit fly), this protein is Trypsin alpha (alphaTry).